The sequence spans 167 residues: Putative universal stress protein SSP1056 (167 aa).

This sequence belongs to the universal stress protein A family.

The protein localises to the cytoplasm. The protein is Putative universal stress protein SSP1056 of Staphylococcus saprophyticus subsp. saprophyticus (strain ATCC 15305 / DSM 20229 / NCIMB 8711 / NCTC 7292 / S-41).